A 318-amino-acid chain; its full sequence is Ferrochelatase (318 aa).

His-186 and Glu-264 together coordinate Fe cation.

It belongs to the ferrochelatase family.

It localises to the cytoplasm. It carries out the reaction heme b + 2 H(+) = protoporphyrin IX + Fe(2+). The protein operates within porphyrin-containing compound metabolism; protoheme biosynthesis; protoheme from protoporphyrin-IX: step 1/1. In terms of biological role, catalyzes the ferrous insertion into protoporphyrin IX. The sequence is that of Ferrochelatase from Chlamydia caviae (strain ATCC VR-813 / DSM 19441 / 03DC25 / GPIC) (Chlamydophila caviae).